The chain runs to 37 residues: MKVKPSVKKICDKCRVIRRHGRVMVICDNPRHKQRQG.

The protein belongs to the bacterial ribosomal protein bL36 family.

The chain is Large ribosomal subunit protein bL36 from Streptomyces avermitilis (strain ATCC 31267 / DSM 46492 / JCM 5070 / NBRC 14893 / NCIMB 12804 / NRRL 8165 / MA-4680).